Reading from the N-terminus, the 360-residue chain is UDP-D-xylose:L-fucose alpha-1,3-D-xylosyltransferase MGP4 (360 aa).

Residues 1–25 form a disordered region; sequence MAQQKFLHQRPIQNPFTNPFSSSPL. Residues 1–41 lie on the Cytoplasmic side of the membrane; the sequence is MAQQKFLHQRPIQNPFTNPFSSSPLSTSSISNRPISLLSRN. Positions 14-25 are enriched in low complexity; it reads NPFTNPFSSSPL. Residues 42–62 form a helical; Signal-anchor for type II membrane protein membrane-spanning segment; it reads GLLLLLALLVILGVFLPWAGS. The Lumenal portion of the chain corresponds to 63-360; sequence PLFPSPNKLS…ASESPLGKLE (298 aa). N-linked (GlcNAc...) asparagine glycans are attached at residues Asn-93 and Asn-168. The DXD motif signature appears at 191–193; that stretch reads DVD. N-linked (GlcNAc...) asparagine glycosylation is found at Asn-285 and Asn-310.

This sequence belongs to the glycosyltransferase 77 family. The cofactor is Mn(2+). It depends on Mg(2+) as a cofactor. As to expression, widely expressed.

It is found in the golgi apparatus membrane. Its function is as follows. Catalyzes the transfer of D-xylose from UDP-alpha-D-xylose onto L-fucose. Probably involved in the biosynthesis of rhamnogalacturonan II (RG-II) through xylosylation of the internal fucose moiety of the A-chain of RG-II, a structurally complex pectic polysaccharide of the primary cell wall. RG-II is essential for the cell wall integrity of rapidly growing tissues such as roots and pollen tube growth and elongation. In Arabidopsis thaliana (Mouse-ear cress), this protein is UDP-D-xylose:L-fucose alpha-1,3-D-xylosyltransferase MGP4.